Consider the following 247-residue polypeptide: Spermatogenesis-associated protein 46 (247 aa).

The interval 125-164 (QRDSCLPEDTADSVCSSSPSPENTCPREATKKSRPGPDTT) is disordered. Residues 137–147 (SVCSSSPSPEN) are compositionally biased toward polar residues.

It localises to the nucleus membrane. Its function is as follows. Plays a role in spermiogenesis and fertilization. The chain is Spermatogenesis-associated protein 46 (SPATA46) from Bos taurus (Bovine).